Reading from the N-terminus, the 451-residue chain is Trigger factor (451 aa).

One can recognise a PPIase FKBP-type domain in the interval 165 to 250 (DDKLTIDFEG…LHQIQAREML (86 aa)).

The protein belongs to the FKBP-type PPIase family. Tig subfamily.

The protein localises to the cytoplasm. The enzyme catalyses [protein]-peptidylproline (omega=180) = [protein]-peptidylproline (omega=0). Functionally, involved in protein export. Acts as a chaperone by maintaining the newly synthesized protein in an open conformation. Functions as a peptidyl-prolyl cis-trans isomerase. The chain is Trigger factor (tig) from Helicobacter pylori (strain ATCC 700392 / 26695) (Campylobacter pylori).